The following is a 1092-amino-acid chain: Leukemia inhibitory factor receptor (1092 aa).

Positions 1–43 (MAAYSWWRQPSWMVDNKRSRMTPNLPWLLSALTLLHLTMHANG) are cleaved as a signal peptide. The Extracellular portion of the chain corresponds to 44–828 (LKRGVQDLKC…SMFVVTKENS (785 aa)). Positions 45 to 126 (KRGVQDLKCT…QSKFTLNEKD (82 aa)) constitute a Fibronectin type-III 1 domain. 2 cysteine pairs are disulfide-bonded: cysteine 53–cysteine 63 and cysteine 80–cysteine 88. Residues asparagine 164, asparagine 199, asparagine 238, and asparagine 261 are each glycosylated (N-linked (GlcNAc...) asparagine). 2 disulfides stabilise this stretch: cysteine 208/cysteine 265 and cysteine 336/cysteine 346. 5 Fibronectin type-III domains span residues 330–429 (VPQK…VAPH), 430–529 (DPTS…TEAT), 533–624 (GPDT…IPND), 622–714 (PNDD…IGYV), and 719–828 (PIVA…KENS). Residues asparagine 385, asparagine 402, asparagine 421, asparagine 440, asparagine 453, and asparagine 476 are each glycosylated (N-linked (GlcNAc...) asparagine). A disulfide bridge links cysteine 461 with cysteine 506. The WSXWS motif motif lies at 514–518 (WSRWS). 6 N-linked (GlcNAc...) asparagine glycosylation sites follow: asparagine 567, asparagine 647, asparagine 658, asparagine 675, asparagine 724, and asparagine 782. Residues 829 to 853 (VGLIIAILIPVAVAVIVGVVTSILC) traverse the membrane as a helical segment. Topologically, residues 854–1092 (YRKREWIKET…TNFFQNKPND (239 aa)) are cytoplasmic. The short motif at 864-872 (FYPDIPNPE) is the Box 1 motif element. Phosphoserine is present on residues serine 922 and serine 1039. The disordered stretch occupies residues 1009-1092 (EDTAAEDEEG…TNFFQNKPND (84 aa)). Composition is skewed to polar residues over residues 1027–1062 (ANVN…NSRQ) and 1081–1092 (SFTNFFQNKPND).

This sequence belongs to the type I cytokine receptor family. Type 2 subfamily. In terms of assembly, heterodimer composed of LIFR and IL6ST. The heterodimer formed by LIFR and IL6ST interacts with the complex formed by CNTF and CNTFR. As to expression, placenta, liver, kidney, heart, lung, brain, and embryos. The liver may be the primary site of synthesis of the secreted form.

Its subcellular location is the cell membrane. The protein resides in the secreted. Its function is as follows. Signal-transducing molecule. May have a common pathway with IL6ST. The soluble form inhibits the biological activity of LIF by blocking its binding to receptors on target cells. The chain is Leukemia inhibitory factor receptor (Lifr) from Mus musculus (Mouse).